Consider the following 396-residue polypeptide: Elongation factor Tu (396 aa).

Positions 10-206 (KPHVNVGTIG…ALDSFIPEPT (197 aa)) constitute a tr-type G domain. Residues 19–26 (GHVDHGKT) form a G1 region. 19 to 26 (GHVDHGKT) provides a ligand contact to GTP. Thr-26 contacts Mg(2+). The tract at residues 60–64 (GITIS) is G2. The G3 stretch occupies residues 81–84 (DCPG). GTP contacts are provided by residues 81–85 (DCPGH) and 136–139 (NKAD). Residues 136-139 (NKAD) are G4. The G5 stretch occupies residues 174 to 176 (SAR).

It belongs to the TRAFAC class translation factor GTPase superfamily. Classic translation factor GTPase family. EF-Tu/EF-1A subfamily. In terms of assembly, monomer.

The protein resides in the cytoplasm. It carries out the reaction GTP + H2O = GDP + phosphate + H(+). GTP hydrolase that promotes the GTP-dependent binding of aminoacyl-tRNA to the A-site of ribosomes during protein biosynthesis. The sequence is that of Elongation factor Tu from Xanthomonas euvesicatoria pv. vesicatoria (strain 85-10) (Xanthomonas campestris pv. vesicatoria).